The following is a 203-amino-acid chain: MSCSLARLCLLTLLSPPLSSAASISPAEPISQAYSLALYMQKNTSALLRTYLQYQGSPLSDPGFSAPELQLSSLPPATAFFKTWHALDDGEWLSLAQRAFLALTQHLQLVEDDQSDLNPGSPILLAQLGAARLRAQGLLGNMAAITTALGLPIPPEEDTLGLAAFGASAFERKCRGYVVTREYGHWTDRAVRDLALLKAKYSA.

The first 21 residues, 1–21 (MSCSLARLCLLTLLSPPLSSA), serve as a signal peptide directing secretion. N-linked (GlcNAc...) asparagine glycosylation occurs at Asn43.

It belongs to the IL-6 superfamily.

It is found in the secreted. Functionally, may have an important role in neuronal precursor development and maturation. This Pan troglodytes (Chimpanzee) protein is Cardiotrophin-2 (CTF2).